Reading from the N-terminus, the 91-residue chain is Large ribosomal subunit protein uL22 (91 aa).

Belongs to the universal ribosomal protein uL22 family. In terms of assembly, part of the 50S ribosomal subunit.

Its function is as follows. This protein binds specifically to 23S rRNA; its binding is stimulated by other ribosomal proteins, e.g. L4, L17, and L20. It is important during the early stages of 50S assembly. It makes multiple contacts with different domains of the 23S rRNA in the assembled 50S subunit and ribosome. The globular domain of the protein is located near the polypeptide exit tunnel on the outside of the subunit, while an extended beta-hairpin is found that lines the wall of the exit tunnel in the center of the 70S ribosome. This Ash yellows phytoplasma protein is Large ribosomal subunit protein uL22 (rplV).